The sequence spans 385 residues: Proliferation-associated protein A (385 aa).

This sequence belongs to the peptidase M24 family.

This chain is Proliferation-associated protein A (prlA), found in Dictyostelium discoideum (Social amoeba).